The following is a 201-amino-acid chain: 3-isopropylmalate dehydratase small subunit (201 aa).

Belongs to the LeuD family. LeuD type 1 subfamily. In terms of assembly, heterodimer of LeuC and LeuD.

It carries out the reaction (2R,3S)-3-isopropylmalate = (2S)-2-isopropylmalate. It functions in the pathway amino-acid biosynthesis; L-leucine biosynthesis; L-leucine from 3-methyl-2-oxobutanoate: step 2/4. In terms of biological role, catalyzes the isomerization between 2-isopropylmalate and 3-isopropylmalate, via the formation of 2-isopropylmaleate. In Shewanella piezotolerans (strain WP3 / JCM 13877), this protein is 3-isopropylmalate dehydratase small subunit.